A 390-amino-acid chain; its full sequence is Nucleosome assembly protein 1-like 1 (390 aa).

Basic and acidic residues predominate over residues 1 to 10 (MADIDNKEQS). The interval 1–32 (MADIDNKEQSELDQDLEDVEEVEEEETGEETK) is disordered. Ala-2 is modified (N-acetylalanine). The residue at position 10 (Ser-10) is a Phosphoserine. Acidic residues predominate over residues 11-28 (ELDQDLEDVEEVEEEETG). Phosphothreonine is present on residues Thr-62 and Thr-64. Phosphoserine is present on Ser-69. N6-acetyllysine is present on Lys-116. The NAP1L motif signature appears at 125-150 (YEPTEEECEWKPDEEDEVSEELKEKA). The span at 131-143 (ECEWKPDEEDEVS) shows a compositional bias: acidic residues. Residues 131 to 163 (ECEWKPDEEDEVSEELKEKAKIEDEKKDEEKED) are disordered. Ser-143 is subject to Phosphoserine. The span at 144-163 (EELKEKAKIEDEKKDEEKED) shows a compositional bias: basic and acidic residues. Residues 272–278 (IKKKQKH) carry the Nuclear localization signal motif. The span at 345–375 (AIEDDDDDYDEEGEEADEEGEEEGDEENDPD) shows a compositional bias: acidic residues. The interval 345–390 (AIEDDDDDYDEEGEEADEEGEEEGDEENDPDYDPKKDQNPAECKQQ) is disordered. 5-glutamyl polyglycine occurs at positions 358 and 359. Residues 376 to 390 (YDPKKDQNPAECKQQ) show a composition bias toward basic and acidic residues. A Cysteine methyl ester modification is found at Cys-387. The S-farnesyl cysteine moiety is linked to residue Cys-387. Residues 388–390 (KQQ) constitute a propeptide, removed in mature form.

It belongs to the nucleosome assembly protein (NAP) family. Homodimer. The dimer binds strongly and sequentially to single and double H2A-H2B heterodimers. Interacts with ERCC6; this interaction increases ERCC6 processivity. Interacts with RAD54. Interacts with SETD1A. Polyglycylated by TTLL10 on glutamate residues, resulting in polyglycine chains on the gamma-carboxyl group. Both polyglutamylation and polyglycylation modifications can coexist on the same protein on adjacent residues, and lowering polyglycylation levels increases polyglutamylation, and reciprocally. Post-translationally, polyglutamylated by TTLL4 on glutamate residues, resulting in polyglutamate chains on the gamma-carboxyl group. Both polyglutamylation and polyglycylation modifications can coexist on the same protein on adjacent residues, and lowering polyglycylation levels increases polyglutamylation, and reciprocally.

It localises to the nucleus. It is found in the melanosome. The protein resides in the cytoplasm. Histone chaperone that plays a role in the nuclear import of H2A-H2B and nucleosome assembly. Also participates in several important DNA repair mechanisms: greatly enhances ERCC6-mediated chromatin remodeling which is essential for transcription-coupled nucleotide excision DNA repair. Also stimulates homologous recombination (HR) by RAD51 and RAD54 which is essential in mitotic DNA double strand break (DSB) repair. Plays a key role in the regulation of embryonic neurogenesis. Promotes the proliferation of neural progenitors and inhibits neuronal differentiation during cortical development. Regulates neurogenesis via the modulation of RASSF10; regulates RASSF10 expression by promoting SETD1A-mediated H3K4 methylation at the RASSF10 promoter. The chain is Nucleosome assembly protein 1-like 1 (Nap1l1) from Rattus norvegicus (Rat).